The following is a 330-amino-acid chain: Putative [LysW]-L-2-aminoadipate/[LysW]-L-glutamate phosphate reductase (330 aa).

Residues 10–13 (SGYI) and 34–36 (SRR) contribute to the NADP(+) site. Cysteine 142 is a catalytic residue. Asparagine 297 lines the NADP(+) pocket.

It belongs to the NAGSA dehydrogenase family. Type 1 subfamily. LysY sub-subfamily.

The protein resides in the cytoplasm. The catalysed reaction is [amino-group carrier protein]-C-terminal-N-(1-carboxy-5-oxopentan-1-yl)-L-glutamine + phosphate + NADP(+) = [amino-group carrier protein]-C-terminal-N-(1-carboxy-5-phosphooxy-5-oxopentan-1-yl)-L-glutamine + NADPH + H(+). It catalyses the reaction [amino-group carrier protein]-C-terminal-gamma-(L-glutamyl-5-semialdehyde)-L-glutamate + phosphate + NADP(+) = [amino-group carrier protein]-C-terminal-gamma-(5-phospho-L-glutamyl)-L-glutamate + NADPH + H(+). The protein operates within amino-acid biosynthesis; L-lysine biosynthesis via AAA pathway; L-lysine from L-alpha-aminoadipate (Thermus route): step 3/5. Its pathway is amino-acid biosynthesis; L-arginine biosynthesis. Functionally, involved in both the arginine and lysine biosynthetic pathways. The sequence is that of Putative [LysW]-L-2-aminoadipate/[LysW]-L-glutamate phosphate reductase from Thermococcus kodakarensis (strain ATCC BAA-918 / JCM 12380 / KOD1) (Pyrococcus kodakaraensis (strain KOD1)).